A 198-amino-acid polypeptide reads, in one-letter code: Ribonuclease HII (198 aa).

The region spanning 3 to 198 (FLEGGVDEAG…SWRTLRGESP (196 aa)) is the RNase H type-2 domain. 3 residues coordinate a divalent metal cation: Asp9, Glu10, and Asp104.

This sequence belongs to the RNase HII family. It depends on Mn(2+) as a cofactor. Mg(2+) is required as a cofactor.

It localises to the cytoplasm. The catalysed reaction is Endonucleolytic cleavage to 5'-phosphomonoester.. In terms of biological role, endonuclease that specifically degrades the RNA of RNA-DNA hybrids. The sequence is that of Ribonuclease HII from Pyrobaculum neutrophilum (strain DSM 2338 / JCM 9278 / NBRC 100436 / V24Sta) (Thermoproteus neutrophilus).